The primary structure comprises 436 residues: Protein 60A (436 aa).

The first 27 residues, 1–27, serve as a signal peptide directing secretion; sequence MTASLVVLPSLWLILIIFTAPYTHCTQ. The propeptide occupies 28–317; the sequence is SGIYIDNGKD…STLHQRKKSK (290 aa). N-linked (GlcNAc...) asparagine glycans are attached at residues asparagine 102, asparagine 114, asparagine 217, and asparagine 229. Residues 293–322 are disordered; that stretch reads IKSTSGHSTQKRTKRSTLHQRKKSKSEPVN. The segment covering 301-316 has biased composition (basic residues); that stretch reads TQKRTKRSTLHQRKKS. 3 cysteine pairs are disulfide-bonded: cysteine 335–cysteine 401, cysteine 364–cysteine 433, and cysteine 368–cysteine 435. A glycan (N-linked (GlcNAc...) asparagine) is linked at asparagine 377.

It belongs to the TGF-beta family. In terms of assembly, homodimer; disulfide-linked.

The protein localises to the secreted. The sequence is that of Protein 60A (gbb) from Drosophila virilis (Fruit fly).